The chain runs to 56 residues: Large ribosomal subunit protein bL33 (56 aa).

Belongs to the bacterial ribosomal protein bL33 family.

The chain is Large ribosomal subunit protein bL33 from Rickettsia typhi (strain ATCC VR-144 / Wilmington).